We begin with the raw amino-acid sequence, 444 residues long: MSNNIPQNTVEVSSVYTYKELSIDKLKYEYEITVGSDYIKQKVNSRLQEIAENAKSPGFRAGKMPYDLVVANYKNEALEYVINNTIDYCSSDLMKKIEVKSHIYPKVDVISLPDLGKENEEGNFVYKLSFESMPEVPVIDLDKINLKKIEAKIEEEDIKEFIDSIKTKFPNFASVDDASYQAKDGDKLIIDFEGRIRNKLFQGGSSKNFAVNLGSGTFINGFEDQLTGMKKGETKNFKLKFPENYQAISLAGQEADFSVRVNEIQIAKDFENDDEIAKSIGFKDYSLLINHAKKMIGDQCTEMRNLLIKKELFDYLDANYSFDLPTDIVKQEQQRMEGELGAQNDSRKEAEKRVKLAMLFMKFSAEHKISLTQNDVLSVIVNQYVSKDVQFDRVLKHFESNKQFQELVRGQALEYKVTDYIIEKVSKEEQIVSVKELKELFDNI.

The 86-residue stretch at G185–F270 folds into the PPIase FKBP-type domain.

The protein belongs to the FKBP-type PPIase family. Tig subfamily.

The protein resides in the cytoplasm. The catalysed reaction is [protein]-peptidylproline (omega=180) = [protein]-peptidylproline (omega=0). Functionally, involved in protein export. Acts as a chaperone by maintaining the newly synthesized protein in an open conformation. Functions as a peptidyl-prolyl cis-trans isomerase. The protein is Trigger factor of Wolbachia pipientis wMel.